Consider the following 85-residue polypeptide: Sec-independent protein translocase protein TatA (85 aa).

Residues 1–21 (MGGISIWQLLIIALIVVLLFG) form a helical membrane-spanning segment. The tract at residues 43 to 85 (MSSEEDKKALEDAEAAKPVQTAQTAQPTQQATEKKPESNKEQA) is disordered. The span at 46-57 (EEDKKALEDAEA) shows a compositional bias: basic and acidic residues. Low complexity predominate over residues 58 to 73 (AKPVQTAQTAQPTQQA). The span at 74 to 85 (TEKKPESNKEQA) shows a compositional bias: basic and acidic residues.

Belongs to the TatA/E family. As to quaternary structure, the Tat system comprises two distinct complexes: a TatABC complex, containing multiple copies of TatA, TatB and TatC subunits, and a separate TatA complex, containing only TatA subunits. Substrates initially bind to the TatABC complex, which probably triggers association of the separate TatA complex to form the active translocon.

The protein resides in the cell inner membrane. In terms of biological role, part of the twin-arginine translocation (Tat) system that transports large folded proteins containing a characteristic twin-arginine motif in their signal peptide across membranes. TatA could form the protein-conducting channel of the Tat system. In Shewanella sp. (strain MR-4), this protein is Sec-independent protein translocase protein TatA.